The chain runs to 657 residues: Histidine ammonia-lyase (657 aa).

The 5-imidazolinone (Ala-Gly) cross-link spans A253–G255. S254 is modified (2,3-didehydroalanine (Ser)). T396 carries the phosphothreonine modification. S635 bears the Phosphoserine mark. Position 637 is a phosphothreonine (T637). S648 is modified (phosphoserine).

This sequence belongs to the PAL/histidase family. In terms of processing, contains an active site 4-methylidene-imidazol-5-one (MIO), which is formed autocatalytically by cyclization and dehydration of residues Ala-Ser-Gly. Liver and skin.

The enzyme catalyses L-histidine = trans-urocanate + NH4(+). The protein operates within amino-acid degradation; L-histidine degradation into L-glutamate; N-formimidoyl-L-glutamate from L-histidine: step 1/3. The protein is Histidine ammonia-lyase (Hal) of Rattus norvegicus (Rat).